Here is a 280-residue protein sequence, read N- to C-terminus: MSASSQKTALTAEDIRAMKGRTPIVSLTAYTTPMAQLMDEHCDFVLVGDSVGMVLHGLPSTLGVTMEMMILHGAAVARGLKRAMMVIDMPFGSYEQSPAQAFANAARLMAETGAAAVKLEGGEEMADTIRFLVKRGIPVMAHIGLTPQSINTLGGYKVQGRDDAAKPLIADARAVAEAGAFAVVLEKVPASLADQVTEIVDIPTIGIGASAGCDGQVLVVDDMLGFFGAFKPKFVKRYAELGPAAEEAIADYASEVRARRFPSAEHTFADHAPQKAPQQD.

Mg(2+) is bound by residues D49 and D88. 3-methyl-2-oxobutanoate-binding positions include 49–50 (DS), D88, and K118. A Mg(2+)-binding site is contributed by E120. Catalysis depends on E186, which acts as the Proton acceptor.

This sequence belongs to the PanB family. As to quaternary structure, homodecamer; pentamer of dimers. Mg(2+) serves as cofactor.

The protein resides in the cytoplasm. It catalyses the reaction 3-methyl-2-oxobutanoate + (6R)-5,10-methylene-5,6,7,8-tetrahydrofolate + H2O = 2-dehydropantoate + (6S)-5,6,7,8-tetrahydrofolate. The protein operates within cofactor biosynthesis; (R)-pantothenate biosynthesis; (R)-pantoate from 3-methyl-2-oxobutanoate: step 1/2. In terms of biological role, catalyzes the reversible reaction in which hydroxymethyl group from 5,10-methylenetetrahydrofolate is transferred onto alpha-ketoisovalerate to form ketopantoate. This is 3-methyl-2-oxobutanoate hydroxymethyltransferase from Ruegeria sp. (strain TM1040) (Silicibacter sp.).